Consider the following 499-residue polypeptide: Centrosomal protein of 57 kDa (499 aa).

Positions 1–35 (MAAASVSETSASQFSNILAEPSKSNGSMVRHSSSP) are enriched in polar residues. Residues 1–58 (MAAASVSETSASQFSNILAEPSKSNGSMVRHSSSPYVVYPPDKPFLNSDLRRSPNKPT) are disordered. A Phosphoserine modification is found at S53. The centrosome localization domain (CLD) stretch occupies residues 58–239 (TFAYPESNSR…KAAQLQTGLE (182 aa)). A coiled-coil region spans residues 63–241 (ESNSRAIFSA…AQLQTGLEVN (179 aa)). Positions 277-490 (AVQPHYRLCL…KDMQSIQNSL (214 aa)) are mediates interaction with microtubules. Disordered regions lie at residues 334–357 (KQVS…SVNE) and 431–476 (KQKK…SRKN). Positions 346–357 (SATPPSSSSVNE) are enriched in low complexity. The stretch at 389–450 (TVELKDNLEC…KTLDEEGNSS (62 aa)) forms a coiled coil. Over residues 431-444 (KQKKELKATRKTLD) the composition is skewed to basic and acidic residues. Positions 449–459 (SSSRSTTTGTT) are enriched in low complexity. The segment covering 460–474 (NKKDFAKPRPGEKSR) has biased composition (basic and acidic residues).

The protein belongs to the translokin family. In terms of assembly, homodimer and homooligomer. Interacts with FGF2 and RAP80. Does not interact with FGF1 or FGF2 isoform 24 kDa. Interacts with microtubules.

It is found in the nucleus. It localises to the cytoplasm. The protein localises to the cytoskeleton. The protein resides in the microtubule organizing center. Its subcellular location is the centrosome. Functionally, centrosomal protein which may be required for microtubule attachment to centrosomes. May act by forming ring-like structures around microtubules. Mediates nuclear translocation and mitogenic activity of the internalized growth factor FGF2. This chain is Centrosomal protein of 57 kDa (CEP57), found in Bos taurus (Bovine).